We begin with the raw amino-acid sequence, 168 residues long: Ubiquitin-conjugating enzyme E2 2 (168 aa).

A UBC core domain is found at 4–150; it reads PAKRRLMRDF…VRETVENSWN (147 aa). C88 acts as the Glycyl thioester intermediate in catalysis. The segment at 143 to 168 is disordered; it reads ETVENSWNEDDEDEDEDEDEDIDDAE. A compositionally biased stretch (acidic residues) spans 149–168; sequence WNEDDEDEDEDEDEDIDDAE.

The protein belongs to the ubiquitin-conjugating enzyme family.

It localises to the cytoplasm. It is found in the nucleus. It carries out the reaction S-ubiquitinyl-[E1 ubiquitin-activating enzyme]-L-cysteine + [E2 ubiquitin-conjugating enzyme]-L-cysteine = [E1 ubiquitin-activating enzyme]-L-cysteine + S-ubiquitinyl-[E2 ubiquitin-conjugating enzyme]-L-cysteine.. Its pathway is protein modification; protein ubiquitination. Functionally, catalyzes the covalent attachment of ubiquitin to other proteins. Plays a role in transcription regulation by catalyzing the monoubiquitination of histone H2B to form H2BK123ub1. H2BK123ub1 gives a specific tag for epigenetic transcriptional activation and is also a prerequisite for H3K4me and H3K79me formation. Also involved in postreplication repair of UV-damaged DNA, in N-end rule-dependent protein degradation and in sporulation. This is Ubiquitin-conjugating enzyme E2 2 (UBC2) from Debaryomyces hansenii (strain ATCC 36239 / CBS 767 / BCRC 21394 / JCM 1990 / NBRC 0083 / IGC 2968) (Yeast).